A 150-amino-acid chain; its full sequence is UPF0735 ACT domain-containing protein Helmi_18680 (150 aa).

The ACT domain maps to 72–147 (SVSLLLEHHP…GVRSAQLVGS (76 aa)).

The protein belongs to the UPF0735 family.

The polypeptide is UPF0735 ACT domain-containing protein Helmi_18680 (Heliobacterium modesticaldum (strain ATCC 51547 / Ice1)).